A 295-amino-acid chain; its full sequence is 4-hydroxy-tetrahydrodipicolinate synthase (295 aa).

Thr48 serves as a coordination point for pyruvate. Catalysis depends on Tyr136, which acts as the Proton donor/acceptor. The active-site Schiff-base intermediate with substrate is the Lys164. Residue Ile206 coordinates pyruvate.

The protein belongs to the DapA family. Homotetramer; dimer of dimers.

It is found in the cytoplasm. The catalysed reaction is L-aspartate 4-semialdehyde + pyruvate = (2S,4S)-4-hydroxy-2,3,4,5-tetrahydrodipicolinate + H2O + H(+). It functions in the pathway amino-acid biosynthesis; L-lysine biosynthesis via DAP pathway; (S)-tetrahydrodipicolinate from L-aspartate: step 3/4. Functionally, catalyzes the condensation of (S)-aspartate-beta-semialdehyde [(S)-ASA] and pyruvate to 4-hydroxy-tetrahydrodipicolinate (HTPA). The sequence is that of 4-hydroxy-tetrahydrodipicolinate synthase from Actinobacillus pleuropneumoniae serotype 5b (strain L20).